Consider the following 464-residue polypeptide: 3-isopropylmalate dehydratase large subunit (464 aa).

The [4Fe-4S] cluster site is built by C337, C397, and C400.

The protein belongs to the aconitase/IPM isomerase family. LeuC type 1 subfamily. In terms of assembly, heterodimer of LeuC and LeuD. Requires [4Fe-4S] cluster as cofactor.

It carries out the reaction (2R,3S)-3-isopropylmalate = (2S)-2-isopropylmalate. It functions in the pathway amino-acid biosynthesis; L-leucine biosynthesis; L-leucine from 3-methyl-2-oxobutanoate: step 2/4. In terms of biological role, catalyzes the isomerization between 2-isopropylmalate and 3-isopropylmalate, via the formation of 2-isopropylmaleate. This Bacillus cereus (strain B4264) protein is 3-isopropylmalate dehydratase large subunit.